Consider the following 386-residue polypeptide: MKIHEYQGKEILRNFGVPVPRGIPAFTVQEAVEAAQKLGGPVWVVKAQIHAGGRGKGGGVKVAKTIEDVKRIAGEILGMQLKTHQTGPEGQKVRRLYIEDGADIQKEYYVSLVTDRATQKVAFIASSEGGMDIEEVAHSTPEKIITEFIDPLTGLGEEQAVKIANGIGLPPESTAQAVDIFQKLYKCYMDTDASLVEINPLNRDSKNALMALDAKFNFDPNALFRHADIVAYRDLDEEDPAEVEASKFDLAYISLDGNIGCLVNGAGLAMATMDTIKLFGGEPANFLDVGGGATAEKVTEAFKIMLKNPDVKGILVNIFGGIMKCDTIADGVIAACKAVNLSVPLVVRMKGTNEDLGKKMLAESGLPIIAADTMAEAATKIVAAVK.

An ATP-grasp domain is found at 9 to 244 (KEILRNFGVP…LDEEDPAEVE (236 aa)). ATP-binding positions include Lys46, 53-55 (GRG), Glu99, Ala102, and Glu107. Residues Asn199 and Asp213 each contribute to the Mg(2+) site. Substrate contacts are provided by residues Asn264 and 321-323 (GIM).

The protein belongs to the succinate/malate CoA ligase beta subunit family. Heterotetramer of two alpha and two beta subunits. It depends on Mg(2+) as a cofactor.

The enzyme catalyses succinate + ATP + CoA = succinyl-CoA + ADP + phosphate. It catalyses the reaction GTP + succinate + CoA = succinyl-CoA + GDP + phosphate. It functions in the pathway carbohydrate metabolism; tricarboxylic acid cycle; succinate from succinyl-CoA (ligase route): step 1/1. Functionally, succinyl-CoA synthetase functions in the citric acid cycle (TCA), coupling the hydrolysis of succinyl-CoA to the synthesis of either ATP or GTP and thus represents the only step of substrate-level phosphorylation in the TCA. The beta subunit provides nucleotide specificity of the enzyme and binds the substrate succinate, while the binding sites for coenzyme A and phosphate are found in the alpha subunit. This is Succinate--CoA ligase [ADP-forming] subunit beta from Polaromonas naphthalenivorans (strain CJ2).